The chain runs to 386 residues: Alkanesulfonate monooxygenase (386 aa).

This sequence belongs to the SsuD family.

The catalysed reaction is an alkanesulfonate + FMNH2 + O2 = an aldehyde + FMN + sulfite + H2O + 2 H(+). Its function is as follows. Catalyzes the desulfonation of aliphatic sulfonates. The sequence is that of Alkanesulfonate monooxygenase from Paraburkholderia phytofirmans (strain DSM 17436 / LMG 22146 / PsJN) (Burkholderia phytofirmans).